Consider the following 541-residue polypeptide: Zinc finger protein 655 (541 aa).

Positions 1-22 (MEEVTSQEAAESPRGHFQPLEN) are disordered. 6 C2H2-type zinc fingers span residues 243–265 (YKCDTCGKTFHQASALTRHQRIH), 271–293 (YKCKECEKSFSQSSSLSRHKRIH), 334–356 (YKCGTCERVFSRSVHLTQHQRTH), 361–383 (CKCTVCGSDFCHTSYLVEHQRLH), 411–433 (YSCNECGKDFRLNSHLIQHQRIH), and 439–461 (HECNECGKSFSQTSCLIQHHKMH). A C2H2-type 7; degenerate zinc finger spans residues 495 to 517 (FDCDAWEENFSQRAHLIQHERVH).

It belongs to the krueppel C2H2-type zinc-finger protein family. As to quaternary structure, interacts with VAV1 and CDK4. Interacts with INTS13; promoting association with the integrator complex.

The protein localises to the nucleus. Functionally, probable transcription factor. The polypeptide is Zinc finger protein 655 (Znf655) (Mus musculus (Mouse)).